The primary structure comprises 188 residues: Ribosome-recycling factor (188 aa).

Belongs to the RRF family.

It localises to the cytoplasm. Functionally, responsible for the release of ribosomes from messenger RNA at the termination of protein biosynthesis. May increase the efficiency of translation by recycling ribosomes from one round of translation to another. This chain is Ribosome-recycling factor, found in Cereibacter sphaeroides (strain ATCC 17023 / DSM 158 / JCM 6121 / CCUG 31486 / LMG 2827 / NBRC 12203 / NCIMB 8253 / ATH 2.4.1.) (Rhodobacter sphaeroides).